The sequence spans 95 residues: Small ribosomal subunit protein uS19 (95 aa).

Positions 76–95 are disordered; sequence PTRRFGGHADKKAKKGELKK. The segment covering 82–95 has biased composition (basic and acidic residues); sequence GHADKKAKKGELKK.

The protein belongs to the universal ribosomal protein uS19 family.

Functionally, protein S19 forms a complex with S13 that binds strongly to the 16S ribosomal RNA. This chain is Small ribosomal subunit protein uS19 (rpsS), found in Thermotoga maritima (strain ATCC 43589 / DSM 3109 / JCM 10099 / NBRC 100826 / MSB8).